The chain runs to 246 residues: ATP synthase subunit a, chloroplastic (246 aa).

The next 5 helical transmembrane spans lie at 33–53 (VHGQ…GFGL), 99–119 (TIFL…WALI), 133–153 (INTT…AGIN), 201–221 (GVLV…LGLF), and 222–242 (TSAI…GESL).

It belongs to the ATPase A chain family. F-type ATPases have 2 components, CF(1) - the catalytic core - and CF(0) - the membrane proton channel. CF(1) has five subunits: alpha(3), beta(3), gamma(1), delta(1), epsilon(1). CF(0) has four main subunits: a, b, b' and c.

It localises to the plastid. The protein localises to the chloroplast thylakoid membrane. Its function is as follows. Key component of the proton channel; it plays a direct role in the translocation of protons across the membrane. The chain is ATP synthase subunit a, chloroplastic from Oltmannsiellopsis viridis (Marine flagellate).